The primary structure comprises 660 residues: Putative ABC transporter ATP-binding MG390 (660 aa).

One can recognise a Peptidase C39 domain in the interval 6–126 (QEQQNECGIC…KLWTGYAATV (121 aa)). Cys12 is a catalytic residue. Helical transmembrane passes span 150-170 (LVTF…LLAT), 188-208 (LVVL…LQVI), 265-285 (YIPN…LIGI), 290-310 (FLLI…YDFF), 379-399 (SFFQ…GIIE), and 402-422 (YQLS…TYAT). Residues 464–657 (ISLENLSVTL…QNKINLTNYL (194 aa)) enclose the ABC transporter domain. 494–501 (GQNGSGKS) is a binding site for ATP.

Belongs to the ABC transporter superfamily.

It localises to the cell membrane. This is Putative ABC transporter ATP-binding MG390 from Mycoplasma genitalium (strain ATCC 33530 / DSM 19775 / NCTC 10195 / G37) (Mycoplasmoides genitalium).